A 258-amino-acid polypeptide reads, in one-letter code: ADP-ribose glycohydrolase MACROD1 (258 aa).

N6-succinyllysine occurs at positions 29, 36, and 62. A Glycyl lysine isopeptide (Lys-Gly) (interchain with G-Cter in SUMO2) cross-link involves residue K71. The 182-residue stretch at 74-255 (NPKYKKDKQL…IYQERLPHYF (182 aa)) folds into the Macro domain. Position 92–94 (92–94 (GDI)) interacts with substrate. K96 carries the N6-acetyllysine modification. Residues 105–107 (AAN), 112–117 (GGGGVD), 200–206 (ISTGVFG), and F239 each bind substrate.

The protein belongs to the MacroD-type family. MacroD1/2-like subfamily. As to quaternary structure, interacts with ESR1; Interacts in a manner that is estrogen independent but is enhanced by estrogen. Interacts (via macro domain) with AR.

It is found in the nucleus. It catalyses the reaction 3''-O-acetyl-ADP-D-ribose + H2O = ADP-D-ribose + acetate + H(+). The catalysed reaction is 2''-O-acetyl-ADP-D-ribose + H2O = ADP-D-ribose + acetate + H(+). It carries out the reaction 4-O-(ADP-D-ribosyl)-L-aspartyl-[protein] + H2O = L-aspartyl-[protein] + ADP-D-ribose + H(+). The enzyme catalyses 5-O-(ADP-D-ribosyl)-L-glutamyl-[protein] + H2O = L-glutamyl-[protein] + ADP-D-ribose + H(+). It catalyses the reaction alpha-NAD(+) + H2O = ADP-D-ribose + nicotinamide + H(+). With respect to regulation, subject to competitive inhibition by the product ADP-ribose. In terms of biological role, removes ADP-ribose from aspartate and glutamate residues in proteins bearing a single ADP-ribose moiety. Inactive towards proteins bearing poly-ADP-ribose. Deacetylates O-acetyl-ADP ribose, a signaling molecule generated by the deacetylation of acetylated lysine residues in histones and other proteins. Plays a role in estrogen signaling. Binds to androgen receptor (AR) and amplifies the transactivation function of AR in response to androgen. May play an important role in carcinogenesis and/or progression of hormone-dependent cancers by feed-forward mechanism that activates ESR1 transactivation. Could be an ESR1 coactivator, providing a positive feedback regulatory loop for ESR1 signal transduction. Could be involved in invasive growth by down-regulating CDH1 in endometrial cancer cells. Enhances ESR1-mediated transcription activity. In Rattus norvegicus (Rat), this protein is ADP-ribose glycohydrolase MACROD1 (Macrod1).